The primary structure comprises 608 residues: 65-kDa microtubule-associated protein 6 (608 aa).

Coiled-coil stretches lie at residues 164-186 (DLTLRNLNEYQTHLRTLQKEKSD), 368-388 (ELLANIEMQINKIKDEAQSRK), and 467-503 (VRLVNILEDYKLTRKQQEEEKKRYRDQKKRQDLLLTQ). The tract at residues 501–565 (LTQRESIYGS…RSYSGHHRQN (65 aa)) is disordered. The segment covering 510–523 (SKPSPRRSSSFRKP) has biased composition (low complexity). Position 513 is a phosphoserine (Ser513). The span at 526–535 (FNISNGNGSV) shows a compositional bias: polar residues. At Ser604 the chain carries Phosphoserine.

This sequence belongs to the MAP65/ASE1 family. In terms of assembly, forms a dimer. Binds to polymerized centrally located endocytic MT.

The protein localises to the nucleus. Its subcellular location is the cytoplasm. It localises to the mitochondrion. The protein resides in the cytoskeleton. It is found in the phragmoplast. In terms of biological role, microtubule-associated protein that mediates the formation of a mesh-like stable and dense network formed by individual microtubules (MT). Confers MT resistance to high concentration of NaCl. The protein is 65-kDa microtubule-associated protein 6 (MAP65-6) of Arabidopsis thaliana (Mouse-ear cress).